Reading from the N-terminus, the 84-residue chain is Small ribosomal subunit protein bS20 (84 aa).

The segment at 1–25 (MANIVSNEKTYRHTQKVRKENHAKM) is disordered.

The protein belongs to the bacterial ribosomal protein bS20 family.

Functionally, binds directly to 16S ribosomal RNA. The protein is Small ribosomal subunit protein bS20 of Ureaplasma parvum serovar 3 (strain ATCC 700970).